The primary structure comprises 536 residues: UDP-glucuronosyltransferase 2A2 (536 aa).

The Cytoplasmic segment spans residues 1–15 (MVSIRDFTMPKKFVQ). Residues 16–36 (MLVFNLTLTEVVLSGNVLIWP) form a helical membrane-spanning segment. The Lumenal portion of the chain corresponds to 37-500 (TDGSHWLNIK…TWFQYHSLDV (464 aa)). N58, N322, and N356 each carry an N-linked (GlcNAc...) asparagine glycan. A helical membrane pass occupies residues 501–521 (IGFLLVCVTTAIFLVIQCCLF). Residues 522–536 (SCQKFGKIGKKKKRE) are Cytoplasmic-facing.

It belongs to the UDP-glycosyltransferase family. Mainly expressed in the nasal mucosa.

It is found in the endoplasmic reticulum membrane. It carries out the reaction glucuronate acceptor + UDP-alpha-D-glucuronate = acceptor beta-D-glucuronoside + UDP + H(+). It catalyses the reaction 17alpha-estradiol + UDP-alpha-D-glucuronate = 17alpha-estradiol 3-O-(beta-D-glucuronate) + UDP + H(+). The enzyme catalyses 17beta-estradiol + UDP-alpha-D-glucuronate = 17beta-estradiol 3-O-(beta-D-glucuronate) + UDP + H(+). The catalysed reaction is chenodeoxycholate + UDP-alpha-D-glucuronate = chenodeoxycholoyl-24-O-(beta-D-glucuronate) + UDP. It carries out the reaction lithocholate + UDP-alpha-D-glucuronate = lithocholoyl-24-O-(beta-D-glucuronate) + UDP. It catalyses the reaction deoxycholate + UDP-alpha-D-glucuronate = deoxycholoyl-24-O-(beta-D-glucuronate) + UDP. The enzyme catalyses hyocholate + UDP-alpha-D-glucuronate = hyocholoyl-24-O-(beta-D-glucuronate) + UDP. The catalysed reaction is hyodeoxycholate + UDP-alpha-D-glucuronate = hyodeoxycholate 6-O-(beta-D-glucuronate) + UDP + H(+). In terms of biological role, UDP-glucuronosyltransferase (UGT) that catalyzes phase II biotransformation reactions in which lipophilic substrates are conjugated with glucuronic acid to increase the metabolite's water solubility, thereby facilitating excretion into either the urine or bile. Essential for the elimination and detoxification of drugs, xenobiotics and endogenous compounds. Catalyzes the glucuronidation of endogenous estrogen hormone estradiol. Contributes to bile acid (BA) detoxification by catalyzing the glucuronidation of BA substrates, which are natural detergents for dietary lipids absorption. Shows a potential role in detoxification of toxic waste compounds in the amniotic fluid before birth, and air-born chemical after birth. This Homo sapiens (Human) protein is UDP-glucuronosyltransferase 2A2.